A 337-amino-acid chain; its full sequence is Glyceraldehyde-3-phosphate dehydrogenase, cytosolic (337 aa).

A binding to NAD region spans residues 1–151; it reads MAKVKVGING…YKSDLNIVSN (151 aa). Residues 13 to 14, D35, and R82 each bind NAD(+); that span reads RI. Residues 152–337 form a catalytic region; that stretch reads ASCTTNCLAP…DLIMHISKCQ (186 aa). D-glyceraldehyde 3-phosphate contacts are provided by residues 153–155, T184, 213–214, and R236; these read SCT and TG. Residue C154 is the Nucleophile of the active site. N318 is an NAD(+) binding site.

Belongs to the glyceraldehyde-3-phosphate dehydrogenase family. Homotetramer.

The protein resides in the cytoplasm. It catalyses the reaction D-glyceraldehyde 3-phosphate + phosphate + NAD(+) = (2R)-3-phospho-glyceroyl phosphate + NADH + H(+). It participates in carbohydrate degradation; glycolysis; pyruvate from D-glyceraldehyde 3-phosphate: step 1/5. Functionally, key enzyme in glycolysis that catalyzes the first step of the pathway by converting D-glyceraldehyde 3-phosphate (G3P) into 3-phospho-D-glyceroyl phosphate. Essential for the maintenance of cellular ATP levels and carbohydrate metabolism. The polypeptide is Glyceraldehyde-3-phosphate dehydrogenase, cytosolic (GAPC) (Mesembryanthemum crystallinum (Common ice plant)).